A 517-amino-acid polypeptide reads, in one-letter code: UDP-N-acetylmuramoylalanine--D-glutamate ligase (517 aa).

Position 143-149 (Gly-143–Thr-149) interacts with ATP.

The protein belongs to the MurCDEF family.

It is found in the cytoplasm. It catalyses the reaction UDP-N-acetyl-alpha-D-muramoyl-L-alanine + D-glutamate + ATP = UDP-N-acetyl-alpha-D-muramoyl-L-alanyl-D-glutamate + ADP + phosphate + H(+). It functions in the pathway cell wall biogenesis; peptidoglycan biosynthesis. Cell wall formation. Catalyzes the addition of glutamate to the nucleotide precursor UDP-N-acetylmuramoyl-L-alanine (UMA). This Leifsonia xyli subsp. xyli (strain CTCB07) protein is UDP-N-acetylmuramoylalanine--D-glutamate ligase.